The chain runs to 317 residues: L-lactate dehydrogenase 1 (317 aa).

Residues V17, D38, K43, Y69, and 83 to 84 (GA) each bind NAD(+). The substrate site is built by Q86 and R92. NAD(+) contacts are provided by residues S105, 122–124 (ATN), and S147. 124–127 (NPVD) contributes to the substrate binding site. 152–155 (DSAR) is a substrate binding site. The Proton acceptor role is filled by H179. Residue Y223 is modified to Phosphotyrosine. T232 contributes to the substrate binding site.

It belongs to the LDH/MDH superfamily. LDH family. In terms of assembly, homotetramer.

It localises to the cytoplasm. It carries out the reaction (S)-lactate + NAD(+) = pyruvate + NADH + H(+). Its pathway is fermentation; pyruvate fermentation to lactate; (S)-lactate from pyruvate: step 1/1. Functionally, catalyzes the conversion of lactate to pyruvate (Potential). Appears to be the primary factor that allows S.aureus growth during nitrosative stress in both aerobically and anaerobically cultured cells. This Staphylococcus aureus (strain JH1) protein is L-lactate dehydrogenase 1.